The following is a 295-amino-acid chain: Elongation factor Ts (295 aa).

The involved in Mg(2+) ion dislocation from EF-Tu stretch occupies residues 79 to 82 (TDFV).

It belongs to the EF-Ts family.

Its subcellular location is the cytoplasm. Its function is as follows. Associates with the EF-Tu.GDP complex and induces the exchange of GDP to GTP. It remains bound to the aminoacyl-tRNA.EF-Tu.GTP complex up to the GTP hydrolysis stage on the ribosome. The chain is Elongation factor Ts from Mycoplasma capricolum subsp. capricolum (strain California kid / ATCC 27343 / NCTC 10154).